Reading from the N-terminus, the 132-residue chain is Prefoldin subunit alpha (132 aa).

It belongs to the prefoldin subunit alpha family. As to quaternary structure, heterohexamer of two alpha and four beta subunits.

Its subcellular location is the cytoplasm. Functionally, molecular chaperone capable of stabilizing a range of proteins. Seems to fulfill an ATP-independent, HSP70-like function in archaeal de novo protein folding. In Pyrobaculum islandicum (strain DSM 4184 / JCM 9189 / GEO3), this protein is Prefoldin subunit alpha.